A 158-amino-acid polypeptide reads, in one-letter code: Transcription elongation factor GreA (158 aa).

It belongs to the GreA/GreB family.

Necessary for efficient RNA polymerase transcription elongation past template-encoded arresting sites. The arresting sites in DNA have the property of trapping a certain fraction of elongating RNA polymerases that pass through, resulting in locked ternary complexes. Cleavage of the nascent transcript by cleavage factors such as GreA or GreB allows the resumption of elongation from the new 3'terminus. GreA releases sequences of 2 to 3 nucleotides. This Baumannia cicadellinicola subsp. Homalodisca coagulata protein is Transcription elongation factor GreA.